A 389-amino-acid chain; its full sequence is Succinate--CoA ligase [ADP-forming] subunit beta (389 aa).

One can recognise an ATP-grasp domain in the interval 9–244 (KQLFADYGLP…PSQEDERERR (236 aa)). ATP contacts are provided by residues Lys-46, 53–55 (GRG), Glu-99, Thr-102, and Glu-107. Mg(2+)-binding residues include Asn-199 and Asp-213. Residues Asn-264 and 321–323 (GIV) each bind substrate.

The protein belongs to the succinate/malate CoA ligase beta subunit family. Heterotetramer of two alpha and two beta subunits. The cofactor is Mg(2+).

It catalyses the reaction succinate + ATP + CoA = succinyl-CoA + ADP + phosphate. It carries out the reaction GTP + succinate + CoA = succinyl-CoA + GDP + phosphate. It participates in carbohydrate metabolism; tricarboxylic acid cycle; succinate from succinyl-CoA (ligase route): step 1/1. Functionally, succinyl-CoA synthetase functions in the citric acid cycle (TCA), coupling the hydrolysis of succinyl-CoA to the synthesis of either ATP or GTP and thus represents the only step of substrate-level phosphorylation in the TCA. The beta subunit provides nucleotide specificity of the enzyme and binds the substrate succinate, while the binding sites for coenzyme A and phosphate are found in the alpha subunit. This Alcanivorax borkumensis (strain ATCC 700651 / DSM 11573 / NCIMB 13689 / SK2) protein is Succinate--CoA ligase [ADP-forming] subunit beta.